Here is a 355-residue protein sequence, read N- to C-terminus: Histidinol-phosphate aminotransferase (355 aa).

K222 is modified (N6-(pyridoxal phosphate)lysine).

The protein belongs to the class-II pyridoxal-phosphate-dependent aminotransferase family. Histidinol-phosphate aminotransferase subfamily. The cofactor is pyridoxal 5'-phosphate.

The catalysed reaction is L-histidinol phosphate + 2-oxoglutarate = 3-(imidazol-4-yl)-2-oxopropyl phosphate + L-glutamate. It participates in amino-acid biosynthesis; L-histidine biosynthesis; L-histidine from 5-phospho-alpha-D-ribose 1-diphosphate: step 7/9. In Natronomonas pharaonis (strain ATCC 35678 / DSM 2160 / CIP 103997 / JCM 8858 / NBRC 14720 / NCIMB 2260 / Gabara) (Halobacterium pharaonis), this protein is Histidinol-phosphate aminotransferase.